A 2278-amino-acid polypeptide reads, in one-letter code: Protein Ycf2 (2278 aa).

Residue 1632 to 1639 (GSIGTGRS) participates in ATP binding.

Belongs to the Ycf2 family.

It is found in the plastid. Its subcellular location is the chloroplast stroma. Functionally, probable ATPase of unknown function. Its presence in a non-photosynthetic plant (Epifagus virginiana) and experiments in tobacco indicate that it has an essential function which is probably not related to photosynthesis. This is Protein Ycf2 from Solanum bulbocastanum (Wild potato).